Reading from the N-terminus, the 138-residue chain is Single-stranded DNA-binding protein 4 (138 aa).

Residues 1–104 enclose the SSB domain; that stretch reads MINNVVLIGR…VVADSFQILE (104 aa). Residues 107-138 form a disordered region; that stretch reads DNSTNQASMDDQLPPSFGNSQPMDISDDDLPF. The short motif at 133-138 is the Important for interaction with partner proteins element; it reads DDDLPF.

In terms of assembly, homotetramer.

Functionally, plays an important role in DNA replication, recombination and repair. Binds to ssDNA and to an array of partner proteins to recruit them to their sites of action during DNA metabolism. The polypeptide is Single-stranded DNA-binding protein 4 (ssb4) (Streptococcus agalactiae serotype V (strain ATCC BAA-611 / 2603 V/R)).